The following is a 150-amino-acid chain: UPF0756 membrane protein HI_1074 (150 aa).

4 helical membrane-spanning segments follow: residues 1-21, 52-72, 81-101, and 123-143; these read MTLQ…LGVL, YGVK…LVSG, GFLS…AWLA, and IIGV…AGIL.

The protein belongs to the UPF0756 family.

Its subcellular location is the cell membrane. This is UPF0756 membrane protein HI_1074 from Haemophilus influenzae (strain ATCC 51907 / DSM 11121 / KW20 / Rd).